Reading from the N-terminus, the 37-residue chain is Large ribosomal subunit protein bL36c (37 aa).

The protein belongs to the bacterial ribosomal protein bL36 family.

The protein localises to the plastid. This is Large ribosomal subunit protein bL36c from Cuscuta reflexa (Southern Asian dodder).